We begin with the raw amino-acid sequence, 183 residues long: Peptide deformylase (183 aa).

Residues Cys-110 and His-153 each contribute to the Fe cation site. Residue Glu-154 is part of the active site. Residue His-157 coordinates Fe cation.

The protein belongs to the polypeptide deformylase family. The cofactor is Fe(2+).

It catalyses the reaction N-terminal N-formyl-L-methionyl-[peptide] + H2O = N-terminal L-methionyl-[peptide] + formate. In terms of biological role, removes the formyl group from the N-terminal Met of newly synthesized proteins. Requires at least a dipeptide for an efficient rate of reaction. N-terminal L-methionine is a prerequisite for activity but the enzyme has broad specificity at other positions. This is Peptide deformylase from Listeria monocytogenes serovar 1/2a (strain ATCC BAA-679 / EGD-e).